A 798-amino-acid chain; its full sequence is Penicillin-binding protein 1A (798 aa).

At 1 to 9 (MIKKIMTTC) the chain is on the cytoplasmic side. A helical; Signal-anchor for type II membrane protein transmembrane segment spans residues 10 to 30 (FGLVFGLCVFAVGLLAIAILA). Residues 31-798 (TYPKLPSLDS…SKRQQLDSLF (768 aa)) lie on the Periplasmic side of the membrane. The tract at residues 50-218 (LTVYSADGKI…SAYNPIVNPE (169 aa)) is transglycosylase. Residue Glu-88 is the Proton donor; for transglycosylase activity of the active site. The transpeptidase stretch occupies residues 378 to 700 (RRALGFAARA…GTIAVPVWVD (323 aa)). Ser-461 acts as the Acyl-ester intermediate; for transpeptidase activity in catalysis. Residues 739-798 (LMLDNGGAAPQPSRRVKEDDGGAAEGGRQEADDESRQDMQETPVLPSNTDSKRQQLDSLF) form a disordered region. Basic and acidic residues-rich tracts occupy residues 765 to 777 (GRQEADDESRQDM) and 788 to 798 (DSKRQQLDSLF).

It in the N-terminal section; belongs to the glycosyltransferase 51 family. In the C-terminal section; belongs to the transpeptidase family.

It is found in the cell inner membrane. It catalyses the reaction [GlcNAc-(1-&gt;4)-Mur2Ac(oyl-L-Ala-gamma-D-Glu-L-Lys-D-Ala-D-Ala)](n)-di-trans,octa-cis-undecaprenyl diphosphate + beta-D-GlcNAc-(1-&gt;4)-Mur2Ac(oyl-L-Ala-gamma-D-Glu-L-Lys-D-Ala-D-Ala)-di-trans,octa-cis-undecaprenyl diphosphate = [GlcNAc-(1-&gt;4)-Mur2Ac(oyl-L-Ala-gamma-D-Glu-L-Lys-D-Ala-D-Ala)](n+1)-di-trans,octa-cis-undecaprenyl diphosphate + di-trans,octa-cis-undecaprenyl diphosphate + H(+). The catalysed reaction is Preferential cleavage: (Ac)2-L-Lys-D-Ala-|-D-Ala. Also transpeptidation of peptidyl-alanyl moieties that are N-acyl substituents of D-alanine.. Its pathway is cell wall biogenesis; peptidoglycan biosynthesis. In terms of biological role, cell wall formation. Synthesis of cross-linked peptidoglycan from the lipid intermediates. The enzyme has a penicillin-insensitive transglycosylase N-terminal domain (formation of linear glycan strands) and a penicillin-sensitive transpeptidase C-terminal domain (cross-linking of the peptide subunits). The sequence is that of Penicillin-binding protein 1A (mrcA) from Neisseria lactamica.